We begin with the raw amino-acid sequence, 329 residues long: Lipoyl synthase (329 aa).

Residues Cys55, Cys60, Cys66, Cys81, Cys85, Cys88, and Ser292 each contribute to the [4Fe-4S] cluster site. Residues 67–281 form the Radical SAM core domain; it reads WEDREATFLI…RDEAEAIGFL (215 aa).

This sequence belongs to the radical SAM superfamily. Lipoyl synthase family. [4Fe-4S] cluster serves as cofactor.

The protein resides in the cytoplasm. The enzyme catalyses [[Fe-S] cluster scaffold protein carrying a second [4Fe-4S](2+) cluster] + N(6)-octanoyl-L-lysyl-[protein] + 2 oxidized [2Fe-2S]-[ferredoxin] + 2 S-adenosyl-L-methionine + 4 H(+) = [[Fe-S] cluster scaffold protein] + N(6)-[(R)-dihydrolipoyl]-L-lysyl-[protein] + 4 Fe(3+) + 2 hydrogen sulfide + 2 5'-deoxyadenosine + 2 L-methionine + 2 reduced [2Fe-2S]-[ferredoxin]. Its pathway is protein modification; protein lipoylation via endogenous pathway; protein N(6)-(lipoyl)lysine from octanoyl-[acyl-carrier-protein]: step 2/2. Its function is as follows. Catalyzes the radical-mediated insertion of two sulfur atoms into the C-6 and C-8 positions of the octanoyl moiety bound to the lipoyl domains of lipoate-dependent enzymes, thereby converting the octanoylated domains into lipoylated derivatives. The chain is Lipoyl synthase from Leifsonia xyli subsp. xyli (strain CTCB07).